The chain runs to 818 residues: Adhesion G protein-coupled receptor E5 (818 aa).

The first 23 residues, 1 to 23, serve as a signal peptide directing secretion; the sequence is MRGVRCPGLLVVCILLSLSGAGT. At 24–533 the chain is on the extracellular side; sequence QKAESKNCAK…VQDPRLELIT (510 aa). Residues 27–68 enclose the EGF-like 1 domain; it reads ESKNCAKWCPINSKCVSNRSCVCKPGFSSEKELITNPAESCE. Disulfide bonds link C31–C41, C35–C47, C49–C67, C73–C86, C80–C95, C97–C118, C169–C182, C176–C191, C193–C212, C218–C231, C225–C240, and C242–C260. An N-linked (GlcNAc...) asparagine glycan is attached at N44. The region spanning 69–119 is the EGF-like 2; calcium-binding domain; that stretch reads DINECLLPGFSCGDFAMCKNSEGSYTCVCNLGYKLLSGAESFVNESENTCQ. A glycan (N-linked (GlcNAc...) asparagine) is linked at N112. The EGF-like 3; calcium-binding domain occupies 165–213; it reads DVNECISGQNHCHQSTHCINKLGGYSCICRQGWKPVPGSPNGPVSTVCE. Positions 214 to 261 constitute an EGF-like 4; calcium-binding domain; the sequence is DVDECSSGQHQCHNSTVCKNTVGSYKCHCRPGWKPTSGSLRGPDTICQ. N-linked (GlcNAc...) asparagine glycosylation is present at N227. N299 and N395 each carry an N-linked (GlcNAc...) asparagine glycan. Positions 347-525 constitute a GAIN-B domain; it reads PFTYTSPSNT…AILMAQYHVQ (179 aa). The residue at position 425 (S425) is a Phosphoserine. N461 and N502 each carry an N-linked (GlcNAc...) asparagine glycan. Intrachain disulfides connect C482/C507 and C499/C509. Positions 482–525 are GPS; sequence CAFWKAHNGNGYWDTDGCSMNGTGFCHCNHLTSFAILMAQYHVQ. Residues 534 to 554 traverse the membrane as a helical segment; it reads KVGLLLSLICLLLCILTFLLV. The Cytoplasmic segment spans residues 555–562; sequence KPIQSSRT. The helical transmembrane segment at 563-583 threads the bilayer; sequence MVHLHLCICLFLGSIIFLVGV. Residues 584 to 602 are Extracellular-facing; that stretch reads ENEGGEVGLRCRLVAMMLH. A helical transmembrane segment spans residues 603 to 623; it reads FCFLAAFCWMALEGVELYFLV. Residues 624-637 are Cytoplasmic-facing; that stretch reads VRVFQGQGLSTWQR. A helical membrane pass occupies residues 638–658; it reads CLIGYGVPLLIVAISMAVVKM. Topologically, residues 659–679 are extracellular; that stretch reads DGYGHATYCWLDFRKQGFLWS. The chain crosses the membrane as a helical span at residues 680–700; sequence FSGPVAFIIFCNAAIFVITVW. Residues 701 to 723 are Cytoplasmic-facing; sequence KLTKKFSEINPNMKKLRKARVLT. A helical membrane pass occupies residues 724-744; that stretch reads ITAIAQLLVLGCTWGFGLFLF. Over 745-752 the chain is Extracellular; sequence NPHSTWLS. Residues 753–773 traverse the membrane as a helical segment; that stretch reads YIFTLLNCLQGLFLYVMLCLL. The Cytoplasmic segment spans residues 774–818; the sequence is NKKVREEYWKWACMVTGSKYTEFNSSTTGTGTSQTRALRSSESGM. At S798 the chain carries Phosphoserine. Low complexity predominate over residues 799–808; that stretch reads STTGTGTSQT. A disordered region spans residues 799 to 818; sequence STTGTGTSQTRALRSSESGM. T808 carries the phosphothreonine modification. Residues 809 to 818 are compositionally biased toward polar residues; that stretch reads RALRSSESGM. Phosphoserine occurs at positions 814 and 816.

It belongs to the G-protein coupled receptor 2 family. LN-TM7 subfamily. As to quaternary structure, forms a heterodimer, consisting of a large extracellular region (alpha subunit) non-covalently linked to a seven-transmembrane moiety (beta subunit). Interacts with complement decay-accelerating factor (DAF). The largest isoform (isoform 1) do not interact with DAF. Also interacts with chondroitin sulfate. Proteolytically cleaved into 2 subunits, an extracellular alpha subunit and a seven-transmembrane subunit. In terms of tissue distribution, although predominantly expressed by cells of the immune system, expressed ubiquitously with particularly high levels of expression in the lung and the thymus gland. In the spleen, expression is detected on most myeloid cells and variable portions of T-cells, B-cells and NK cells. In the bone marrow, expressed in nearly all myeloid cells, whereas little if any expression is found on erythroid cells.

It localises to the cell membrane. The protein localises to the secreted. The protein resides in the extracellular space. In terms of biological role, receptor potentially involved in both adhesion and signaling processes early after leukocyte activation. Plays an essential role in leukocyte migration. This chain is Adhesion G protein-coupled receptor E5, found in Mus musculus (Mouse).